The sequence spans 92 residues: DNA-directed RNA polymerase subunit Rpo11 (92 aa).

It belongs to the archaeal Rpo11/eukaryotic RPB11/RPC19 RNA polymerase subunit family. In terms of assembly, part of the RNA polymerase complex.

Its subcellular location is the cytoplasm. The enzyme catalyses RNA(n) + a ribonucleoside 5'-triphosphate = RNA(n+1) + diphosphate. DNA-dependent RNA polymerase (RNAP) catalyzes the transcription of DNA into RNA using the four ribonucleoside triphosphates as substrates. The protein is DNA-directed RNA polymerase subunit Rpo11 of Saccharolobus islandicus (strain Y.N.15.51 / Yellowstone #2) (Sulfolobus islandicus).